A 212-amino-acid chain; its full sequence is MTTQKIVPTKSTDGSKLFRHQAKFVAGAMNINQIPNFSLPEIAFVGKSNVGKSSLINTICNNKNLAKVSNTAGRTRQINFFNLADKLIIVDLPGYGFANVPISVKEQWGVLISYYLRNSYNLRLVNLLIDSRRGIKENDKKVADLLLANKREFQIIFTKSDKVTDHKNLHDEAQNFLATLNYSCNVMYVSNRSKEGARELKASLAKCIKFQK.

Residues 38-210 enclose the EngB-type G domain; the sequence is SLPEIAFVGK…KASLAKCIKF (173 aa). GTP contacts are provided by residues 46–53, 73–77, 91–94, 158–161, and 189–191; these read GKSNVGKS, GRTRQ, DLPG, TKSD, and VSN. Mg(2+) contacts are provided by Ser53 and Thr75.

It belongs to the TRAFAC class TrmE-Era-EngA-EngB-Septin-like GTPase superfamily. EngB GTPase family. The cofactor is Mg(2+).

Functionally, necessary for normal cell division and for the maintenance of normal septation. The sequence is that of Probable GTP-binding protein EngB from Rickettsia rickettsii (strain Sheila Smith).